We begin with the raw amino-acid sequence, 211 residues long: Pyridoxine/pyridoxamine 5'-phosphate oxidase (211 aa).

Residues 8 to 11 and Lys66 contribute to the substrate site; that span reads RRDY. Residues 61-66, 76-77, Arg82, Lys83, and Gln105 each bind FMN; these read RLVLLK and FT. 3 residues coordinate substrate: Tyr123, Arg127, and Ser131. FMN is bound by residues 140 to 141 and Trp184; that span reads QS. 190–192 provides a ligand contact to substrate; sequence RLH. Residue Arg194 participates in FMN binding.

This sequence belongs to the pyridoxamine 5'-phosphate oxidase family. Homodimer. It depends on FMN as a cofactor.

It carries out the reaction pyridoxamine 5'-phosphate + O2 + H2O = pyridoxal 5'-phosphate + H2O2 + NH4(+). The catalysed reaction is pyridoxine 5'-phosphate + O2 = pyridoxal 5'-phosphate + H2O2. It participates in cofactor metabolism; pyridoxal 5'-phosphate salvage; pyridoxal 5'-phosphate from pyridoxamine 5'-phosphate: step 1/1. The protein operates within cofactor metabolism; pyridoxal 5'-phosphate salvage; pyridoxal 5'-phosphate from pyridoxine 5'-phosphate: step 1/1. Catalyzes the oxidation of either pyridoxine 5'-phosphate (PNP) or pyridoxamine 5'-phosphate (PMP) into pyridoxal 5'-phosphate (PLP). In Thermosynechococcus vestitus (strain NIES-2133 / IAM M-273 / BP-1), this protein is Pyridoxine/pyridoxamine 5'-phosphate oxidase.